A 156-amino-acid polypeptide reads, in one-letter code: MNVIEGGVAAPNAKIAIVISRFNSFINESLLSGAIDTLKRFGQVSEENITVVRCPGAVELPLVAQRVAKTAKYDAIVSLGSVIRGGTPHFDYVCSECNKGLAQVSLEYSIPVAFGVLTVDTIDQAIERAGTKAGNKGAEAALSALEMINVLSQIES.

5-amino-6-(D-ribitylamino)uracil-binding positions include F22, A57 to E59, and S81 to I83. G86–T87 contacts (2S)-2-hydroxy-3-oxobutyl phosphate. The active-site Proton donor is H89. 5-amino-6-(D-ribitylamino)uracil is bound at residue F114. R128 is a (2S)-2-hydroxy-3-oxobutyl phosphate binding site.

This sequence belongs to the DMRL synthase family. Forms an icosahedral capsid composed of 60 subunits, arranged as a dodecamer of pentamers.

The enzyme catalyses (2S)-2-hydroxy-3-oxobutyl phosphate + 5-amino-6-(D-ribitylamino)uracil = 6,7-dimethyl-8-(1-D-ribityl)lumazine + phosphate + 2 H2O + H(+). Its pathway is cofactor biosynthesis; riboflavin biosynthesis; riboflavin from 2-hydroxy-3-oxobutyl phosphate and 5-amino-6-(D-ribitylamino)uracil: step 1/2. Its function is as follows. Catalyzes the formation of 6,7-dimethyl-8-ribityllumazine by condensation of 5-amino-6-(D-ribitylamino)uracil with 3,4-dihydroxy-2-butanone 4-phosphate. This is the penultimate step in the biosynthesis of riboflavin. The polypeptide is 6,7-dimethyl-8-ribityllumazine synthase (Aliivibrio fischeri (strain ATCC 700601 / ES114) (Vibrio fischeri)).